The chain runs to 782 residues: E3 ubiquitin-protein ligase SopA (782 aa).

The disordered stretch occupies residues 140 to 170 (SANNRPTVSEGRTPPVSPSLSLQATSSPSSP). The span at 157 to 170 (PSLSLQATSSPSSP) shows a compositional bias: low complexity. C753 (glycyl thioester intermediate) is an active-site residue.

This sequence belongs to the SopA E3 ligase family. Ubiquitinated in the presence of host E1 ubiquitin-activating enzyme, E2 ubiquitin-conjugating enzyme and ubiquitin.

The protein resides in the secreted. It localises to the host cell. The enzyme catalyses S-ubiquitinyl-[E2 ubiquitin-conjugating enzyme]-L-cysteine + [acceptor protein]-L-lysine = [E2 ubiquitin-conjugating enzyme]-L-cysteine + N(6)-ubiquitinyl-[acceptor protein]-L-lysine.. In terms of biological role, effector proteins function to alter host cell physiology and promote bacterial survival in host tissues. This protein is an E3 ubiquitin ligase that interferes with host's ubiquitination pathway. This Salmonella agona (strain SL483) protein is E3 ubiquitin-protein ligase SopA (sopA).